Here is a 770-residue protein sequence, read N- to C-terminus: Pheromone-regulated membrane protein 10 (770 aa).

Disordered regions lie at residues 1–125 (MDGR…DGDD) and 139–169 (NQGGLVPGLAPIPSENENGKDDIEKNNRNEE). 2 stretches are compositionally biased toward polar residues: residues 49–63 (SGKSISDLGISNNDN) and 78–93 (DLSSRSTETSDNSKGT). Over residues 155-169 (ENGKDDIEKNNRNEE) the composition is skewed to basic and acidic residues. The next 10 helical transmembrane spans lie at 453 to 473 (WMCVLLYAFCSAMVTPYAFGG), 475 to 495 (WVNLAISFFMGLCVGSLQFIL), 505 to 525 (VFEISASIVVSFCGRAFGSIP), 529 to 549 (ICFGAVTQGSLALILPGYIIL), 568 to 588 (FYAIIYSLFLGFGITLGSALF), 604 to 624 (LISPWFRFLFVPAFTISISLL), 629 to 649 (ISQLPVMVFISCTGYVVTYWA), 659 to 679 (FTAALAAFVIGVLGNLYSRIW), 681 to 701 (GLAVSAMLPAIFVQVPSGIAS), and 740 to 760 (IQVCVGISVGLFASSLFVYPF).

The protein belongs to the ThrE exporter (TC 2.A.79) family.

The protein resides in the membrane. This Saccharomyces cerevisiae (strain YJM789) (Baker's yeast) protein is Pheromone-regulated membrane protein 10 (PRM10).